Here is a 286-residue protein sequence, read N- to C-terminus: Transcription factor MafA (286 aa).

2 positions are modified to phosphoserine: S14 and S49. Low complexity predominate over residues 51-85 (SSTPLSTPCSSVPSSPSFCAPSPGGQPSAGPTAAP). Positions 51-87 (SSTPLSTPCSSVPSSPSFCAPSPGGQPSAGPTAAPLG) are disordered. 2 positions are modified to phosphothreonine: T53 and T57. 2 positions are modified to phosphoserine: S61 and S65. A Phosphothreonine modification is found at T113. Positions 126–167 (HHHHHHHQSYESFRPQPFGGEELPPAAHHHNAHHHHHHHHLR) are disordered. Residues 152–166 (AHHHNAHHHHHHHHL) are compositionally biased toward basic residues. Positions 199 to 224 (RLKQNRRTLKNRGYAQSCRYKRVQQR) are basic motif. The region spanning 199 to 262 (RLKQNRRTLK…DLYKEKYEKL (64 aa)) is the bZIP domain. The interval 227-248 (LENEKCQLQSQVEQLKQEVSRL) is leucine-zipper. The tract at residues 265–286 (RGFPREPSPPAAPKTTAADFFM) is disordered. Residue S272 is modified to Phosphoserine. Positions 277–286 (PKTTAADFFM) are enriched in low complexity.

It belongs to the bZIP family. Maf subfamily. In terms of assembly, forms homodimers or heterodimers. May interact (via leucine-zipper domain) with MAFB. May interact with FOS and JUN. Interacts with PCAF; this interaction impairs MAFA ubiquitination.

It localises to the nucleus. Transcription factor involved in transcription regulation during lens development, including that of crystallin and filensin/BFSP1 genes. Binds to CRE-type MARE 5'-TGCTGACGTCAGCA-3' and TRE-type MARE 5'-TGCTGACTCAGCA-3' DNA sequences. The chain is Transcription factor MafA (MAFA) from Gallus gallus (Chicken).